Reading from the N-terminus, the 509-residue chain is MDEFHRYGKEDSSWQQCFLYPLFFQEDLYAIYHDHYLDGSSSSESMEHLSSNDQFSFLTVKRLIGQIRQQNNSIVFFLNCDPNPLVDRNKSFYYESVLEGLTLVLEVPFSIRSKYSVEGMNEWKSFRSIHSIFPFLEDKFPHSNYILDTRIPYSIHPEILVRTFRRWIRDAPSLHPLRSVLYKYRNSPDNLQKSIIIDPRVNTRFLLFLWNHYVYGCESILVPLLKRSFHPRSLSHGSFPDQTHFDRKIKHIIRNYRRNSLKSIWSLKDPRIHYVRYAERSIIAIKGTHLLVKKCRYHLPIFRQFYFHLWSEPYRVCSHQLSKNCSSSLGYFLRVRMKPLLVRTKMLDELFITDLITDEFDPIVPIVPIIGLLAREKLCDISGRPISKLYWTSLTDDDILDRFDRIWKNIFHYYSGSLDRDGLYRIKYILSLSCAKTLACKHKSTIRVVRKELGPELFKKYFSKEREFDFPAFSSKAAARSQRERIWHSDIPQINPLANSWQKIQDLKS.

The protein belongs to the intron maturase 2 family. MatK subfamily.

It is found in the plastid. It localises to the chloroplast. Usually encoded in the trnK tRNA gene intron. Probably assists in splicing its own and other chloroplast group II introns. The sequence is that of Maturase K from Abies firma (Momi fir).